We begin with the raw amino-acid sequence, 146 residues long: UPF0260 protein VF_1660 (146 aa).

The protein belongs to the UPF0260 family.

The sequence is that of UPF0260 protein VF_1660 from Aliivibrio fischeri (strain ATCC 700601 / ES114) (Vibrio fischeri).